A 211-amino-acid polypeptide reads, in one-letter code: UPF0502 protein PC1_1804 (211 aa).

A disordered region spans residues 168 to 188; that stretch reads SGDASDAAPEEEGAGDNSHQL.

This sequence belongs to the UPF0502 family.

The protein is UPF0502 protein PC1_1804 of Pectobacterium carotovorum subsp. carotovorum (strain PC1).